Here is a 113-residue protein sequence, read N- to C-terminus: U11-theraphotoxin-Hhn1s (113 aa).

A signal peptide spans 1–21; sequence MNTVRVTFLLVFVLAVSLGQA. Residues 22–74 constitute a propeptide that is removed on maturation; it reads DKDENRMEMQEKTEQGKSYLDFAENLLLQKLEELEAKLLEEDSEESRNSRQKR. Positions 61 to 83 are disordered; sequence EEDSEESRNSRQKRCIGEGVPCD. 3 disulfide bridges follow: cysteine 75-cysteine 90, cysteine 82-cysteine 95, and cysteine 89-cysteine 110.

Belongs to the neurotoxin 14 (magi-1) family. 01 (HNTX-16) subfamily. Expressed by the venom gland.

It is found in the secreted. In terms of biological role, probable ion channel inhibitor. The sequence is that of U11-theraphotoxin-Hhn1s from Cyriopagopus hainanus (Chinese bird spider).